We begin with the raw amino-acid sequence, 131 residues long: Large ribosomal subunit protein bL19c (131 aa).

This sequence belongs to the bacterial ribosomal protein bL19 family.

It localises to the plastid. The protein localises to the cyanelle. In terms of biological role, this protein is located at the 30S-50S ribosomal subunit interface and may play a role in the structure and function of the aminoacyl-tRNA binding site. This is Large ribosomal subunit protein bL19c (rpl19) from Cyanophora paradoxa.